Reading from the N-terminus, the 310-residue chain is UPF0761 membrane protein VSAL_I2938 (310 aa).

Helical transmembrane passes span 34 to 54 (YMAYITLLSLVPLVTVLLSVL), 97 to 117 (MTAVGSGFLFVASVMLISAID), 136 to 156 (FSLYWMILTLGPLLVWASLAA), 178 to 198 (LLGWLPIILSFSAFLGLYLLV), 207 to 227 (HALVGAMSAGCLFEVSKVGFA), and 242 to 262 (ALAAVPILFVWIYLCWIIVLI).

Belongs to the UPF0761 family.

It localises to the cell inner membrane. The protein is UPF0761 membrane protein VSAL_I2938 of Aliivibrio salmonicida (strain LFI1238) (Vibrio salmonicida (strain LFI1238)).